The sequence spans 913 residues: Protein translocase subunit SecA (913 aa).

Residues glutamine 87, 105–109 (GEGKT), and aspartate 517 contribute to the ATP site. Disordered regions lie at residues 568-588 (ESRR…DPGS) and 871-913 (EVAV…GKLS). Positions 897, 899, 908, and 909 each coordinate Zn(2+). A compositionally biased stretch (basic residues) spans 903 to 913 (KKYKQCHGKLS).

The protein belongs to the SecA family. Monomer and homodimer. Part of the essential Sec protein translocation apparatus which comprises SecA, SecYEG and auxiliary proteins SecDF-YajC and YidC. It depends on Zn(2+) as a cofactor.

The protein localises to the cell inner membrane. Its subcellular location is the cytoplasm. It catalyses the reaction ATP + H2O + cellular proteinSide 1 = ADP + phosphate + cellular proteinSide 2.. Part of the Sec protein translocase complex. Interacts with the SecYEG preprotein conducting channel. Has a central role in coupling the hydrolysis of ATP to the transfer of proteins into and across the cell membrane, serving both as a receptor for the preprotein-SecB complex and as an ATP-driven molecular motor driving the stepwise translocation of polypeptide chains across the membrane. The protein is Protein translocase subunit SecA of Coxiella burnetii (strain RSA 493 / Nine Mile phase I).